Reading from the N-terminus, the 216-residue chain is Capsule polysaccharide export ATP-binding protein CtrD (216 aa).

The region spanning 2 to 215 (ISVEHVSKRY…DKAYEYYNSL (214 aa)) is the ABC transporter domain. ATP is bound at residue 38–45 (GRNGAGKS).

Belongs to the ABC transporter superfamily.

The protein localises to the cell inner membrane. It catalyses the reaction ATP + H2O + capsular polysaccharide-[capsular polysaccharide-binding protein]Side 1 = ADP + phosphate + capsular polysaccharideSide 2 + [capsular polysaccharide-binding protein]Side 1.. Its function is as follows. Putative ATP-binding protein, and an energy-coupling component of capsule polysaccharide export apparatus. The sequence is that of Capsule polysaccharide export ATP-binding protein CtrD (ctrD) from Neisseria meningitidis serogroup B (strain ATCC BAA-335 / MC58).